The sequence spans 317 residues: R2-like ligand binding oxidase (317 aa).

The Mn(2+) site is built by Glu73, Glu106, and His109. The segment at residues 76–167 (VTQDLQPFMA…ANQVRASVTY (92 aa)) is a cross-link (3-(O4'-tyrosyl)-valine (Val-Tyr)). Glu106 provides a ligand contact to Fe cation. Residues Glu172, Glu207, and His210 each contribute to the Fe cation site.

It belongs to the ribonucleoside diphosphate reductase small chain family. R2-like ligand binding oxidase subfamily. Homodimer. Requires Fe cation as cofactor. It depends on Mn(2+) as a cofactor.

Its function is as follows. Probable oxidase. This Saccharopolyspora erythraea (strain ATCC 11635 / DSM 40517 / JCM 4748 / NBRC 13426 / NCIMB 8594 / NRRL 2338) protein is R2-like ligand binding oxidase.